A 259-amino-acid polypeptide reads, in one-letter code: 3-deoxy-manno-octulosonate cytidylyltransferase (259 aa).

This sequence belongs to the KdsB family.

It is found in the cytoplasm. It catalyses the reaction 3-deoxy-alpha-D-manno-oct-2-ulosonate + CTP = CMP-3-deoxy-beta-D-manno-octulosonate + diphosphate. It functions in the pathway nucleotide-sugar biosynthesis; CMP-3-deoxy-D-manno-octulosonate biosynthesis; CMP-3-deoxy-D-manno-octulosonate from 3-deoxy-D-manno-octulosonate and CTP: step 1/1. The protein operates within bacterial outer membrane biogenesis; lipopolysaccharide biosynthesis. Functionally, activates KDO (a required 8-carbon sugar) for incorporation into bacterial lipopolysaccharide in Gram-negative bacteria. This is 3-deoxy-manno-octulosonate cytidylyltransferase from Aeromonas salmonicida (strain A449).